The following is a 544-amino-acid chain: Probable protein kinase UbiB (544 aa).

The 379-residue stretch at Asp-123–Leu-501 folds into the Protein kinase domain. Residues Leu-129–Val-137 and Lys-152 each bind ATP. Asp-287 (proton acceptor) is an active-site residue. 2 consecutive transmembrane segments (helical) span residues Gly-496 to Ile-516 and Gln-519 to Trp-539.

The protein belongs to the ABC1 family. UbiB subfamily.

The protein localises to the cell inner membrane. Its pathway is cofactor biosynthesis; ubiquinone biosynthesis [regulation]. Its function is as follows. Is probably a protein kinase regulator of UbiI activity which is involved in aerobic coenzyme Q (ubiquinone) biosynthesis. This is Probable protein kinase UbiB from Vibrio cholerae serotype O1 (strain ATCC 39315 / El Tor Inaba N16961).